A 210-amino-acid polypeptide reads, in one-letter code: Probable peroxygenase 7 (210 aa).

The tract at residues 1-24 (MSHQTVALASKAKSPKPKRGKLDK) is disordered. In terms of domain architecture, EF-hand spans 25 to 60 (EKMTALEKHVSFFDRNKDGTVYPWETYQGFRALGTG). His33 contributes to the heme binding site. Residues Asp38, Asn40, Asp42, Thr44, and Glu49 each contribute to the Ca(2+) site. The Proline-knot signature appears at 81-90 (PGKGFSPLFP). A Phosphoserine modification is found at Ser188.

The protein belongs to the caleosin family. As to quaternary structure, homodimer. Heme b is required as a cofactor. It depends on Ca(2+) as a cofactor. As to expression, expressed in pollen coat.

Its subcellular location is the secreted. It carries out the reaction RH + ROOH = ROH + ROH.. In terms of biological role, probable calcium-binding peroxygenase. May be involved in pollination. This chain is Probable peroxygenase 7 (PXG7), found in Arabidopsis thaliana (Mouse-ear cress).